The primary structure comprises 275 residues: UPF0328 protein ECU05_0050 (275 aa).

This sequence belongs to the UPF0328 family.

The sequence is that of UPF0328 protein ECU05_0050 from Encephalitozoon cuniculi (strain GB-M1) (Microsporidian parasite).